The chain runs to 314 residues: Glyceraldehyde-3-phosphate dehydrogenase A, chloroplastic (314 aa).

Residues 5–6 (RI), aspartate 29, and arginine 74 each bind NADP(+). A disulfide bond links cysteine 13 and cysteine 283. D-glyceraldehyde 3-phosphate contacts are provided by residues 147–149 (SCT), threonine 178, arginine 193, 206–207 (TG), and arginine 229. Cysteine 148 (nucleophile) is an active-site residue. Asparagine 311 is an NADP(+) binding site.

Belongs to the glyceraldehyde-3-phosphate dehydrogenase family. Homotetramer.

It localises to the plastid. It is found in the chloroplast. The enzyme catalyses D-glyceraldehyde 3-phosphate + phosphate + NADP(+) = (2R)-3-phospho-glyceroyl phosphate + NADPH + H(+). It functions in the pathway carbohydrate biosynthesis; Calvin cycle. The chain is Glyceraldehyde-3-phosphate dehydrogenase A, chloroplastic (GapA) from Scenedesmus vacuolatus (Green alga).